The sequence spans 382 residues: Nitric oxide reductase FlRd-NAD(+) reductase (382 aa).

The protein belongs to the FAD-dependent oxidoreductase family. It depends on FAD as a cofactor.

The protein localises to the cytoplasm. The enzyme catalyses 2 reduced [nitric oxide reductase rubredoxin domain] + NAD(+) + H(+) = 2 oxidized [nitric oxide reductase rubredoxin domain] + NADH. Its pathway is nitrogen metabolism; nitric oxide reduction. One of at least two accessory proteins for anaerobic nitric oxide (NO) reductase. Reduces the rubredoxin moiety of NO reductase. This Vibrio vulnificus (strain YJ016) protein is Nitric oxide reductase FlRd-NAD(+) reductase.